A 321-amino-acid polypeptide reads, in one-letter code: Low affinity immunoglobulin epsilon Fc receptor (321 aa).

Residues 1-21 (MEEGQYSEIEELPRRRCCRRG) lie on the Cytoplasmic side of the membrane. Residues cysteine 17 and cysteine 18 are each lipidated (S-palmitoyl cysteine). Residues 22–47 (TQIVLLGLVTAALWAGLLTLLLLWHW) traverse the membrane as a helical; Signal-anchor for type II membrane protein segment. The Extracellular portion of the chain corresponds to 48–321 (DTTQSLKQLE…LPTPSAPLHS (274 aa)). An N-linked (GlcNAc...) asparagine glycan is attached at asparagine 63. The tract at residues 66–85 (QVSKNLESHHGDQMAQKSQS) is disordered. Repeats lie at residues 69–89 (KNLE…TQIS), 90–110 (QELE…LELS), and 111–131 (WNLN…LNER). Cystine bridges form between cysteine 160–cysteine 288, cysteine 163–cysteine 174, cysteine 191–cysteine 282, and cysteine 259–cysteine 273. The C-type lectin domain occupies 162–284 (TCPEKWINFQ…RKLGAWVCDR (123 aa)). The Ca(2+) site is built by glutamate 249, threonine 251, asparagine 269, and aspartate 270. The segment at 290–321 (PPASEGSAESMGPDSRPDPDGRLPTPSAPLHS) is disordered. A glycan (O-linked (Xyl...) (chondroitin sulfate) serine) is linked at serine 296.

Homotrimer. Interacts (via C-type lectin domain) with IGHE (via CH3 region); this interaction regulates IgE homeostasis. Interacts (via the C-terminus) with CR2/CD21 (via Sushi domain 1 and 2). Post-translationally, N- and O-glycosylated. In terms of processing, the secreted form sCD23 is produced by ADAM10-mediated ectodomain shedding. As to expression, detected in urine (at protein level).

It is found in the cell membrane. Its subcellular location is the secreted. Its function is as follows. Low-affinity receptor for immunoglobulin E (IgE) and CR2/CD21. Has essential roles in the regulation of IgE production and in the differentiation of B cells. On B cells, initiates IgE-dependent antigen uptake and presentation to T cells. On macrophages, upon IgE binding and antigen cross-linking induces intracellular killing of parasites through activation of L-Arginine-nitric oxide pathway. In Homo sapiens (Human), this protein is Low affinity immunoglobulin epsilon Fc receptor (FCER2).